Reading from the N-terminus, the 506-residue chain is 5'-3' exonuclease PLD4 (506 aa).

The helical transmembrane segment at L31–L51 threads the bilayer. C94 and C250 are joined by a disulfide. N-linked (GlcNAc...) asparagine glycans are attached at residues N150 and N171. In terms of domain architecture, PLD phosphodiesterase 1 spans T209–S236. H214 serves as the catalytic Proton donor. Residues K216 and D221 contribute to the active site. N-linked (GlcNAc...) asparagine glycosylation is found at N249, N281, N403, N417, and N427. C379 and C502 are joined by a disulfide. The 27-residue stretch at F423–Y449 folds into the PLD phosphodiesterase 2 domain. Residue H428 is the Nucleophile of the active site. N-linked (GlcNAc...) asparagine glycosylation is present at N444.

Belongs to the phospholipase D family. As to quaternary structure, homodimer. Highly N-glycosylated. As to expression, expressed in plasmacytoid dendritic cells and monocytes (at protein level).

It is found in the endoplasmic reticulum membrane. The protein resides in the golgi apparatus. Its subcellular location is the trans-Golgi network membrane. The protein localises to the nucleus. It localises to the early endosome. It is found in the cytoplasmic vesicle. The protein resides in the phagosome. Its subcellular location is the lysosome. It catalyses the reaction Exonucleolytic cleavage in the 5'- to 3'-direction to yield nucleoside 3'-phosphates.. The catalysed reaction is a 5'-end 5'-dephospho-ribonucleotidyl-ribonucleotide-RNA + H2O = a ribonucleoside 3'-phosphate + a 5'-end dephospho-ribonucleoside-RNA + H(+). The enzyme catalyses a ribonucleoside 3'-phosphate-2'-3'-cyclophospho-GMP + H2O = a ribonucleoside 3'-phosphate + 2',3'-cyclophospho-GMP + H(+). It carries out the reaction a 5'-end 5'-dephospho-2'-deoxyribonucleotidyl-2'-deoxyribonucleotide in single-stranded DNA + H2O = a 5'-end dephospho-2'-deoxyribonucleoside in single-stranded DNA + a 2'-deoxyribonucleoside 3'-phosphate + H(+). It catalyses the reaction a 5'-end 5'-phospho-2'-deoxyribonucleotide in single-stranded DNA + H2O = a 5'-end 5'-dephospho-2'-deoxyribonucleotide in single-stranded DNA + phosphate. The catalysed reaction is a 3-lyso-sn-glycero-1-phospho-(3'-acyl-1'-sn-glycerol) + a 1-acyl-sn-glycerol = a 3-acyl-sn-glycero-1-phospho-(3'-acyl-1'-sn-glycerol) + glycerol. The enzyme catalyses 3-lyso-sn-glycero-1-phospho-(3'-(9Z-octadecenoyl)-1'-sn-glycerol) + 1-(9Z-octadecenoyl)-sn-glycerol = 3-(9Z-octadecenoyl)-sn-glycero-1-phospho-(3'-(9Z-octadecenoyl)-1'-sn-glycerol) + glycerol. With respect to regulation, the exonuclease activity toward ssDNA substrate is Ca(2+) and Mg(2+)-independent, but it is inhibited by Fe(2+), Cu(2+) and to a lesser extent Zn(2+) ions. Its function is as follows. 5'-&gt;3' exonuclease that hydrolyzes the phosphodiester bond of single-stranded DNA (ssDNA) and RNA molecules to form nucleoside 3'-monophosphates and 5'-end 5'-hydroxy deoxyribonucleotide/ribonucleotide fragments. Partially redundant with PLD3, can cleave all four nucleotides displaying higher efficiency for ssDNA and RNA fragments initiated with uridine and guanosine residues and lower efficiency for cytidine-initiated substrates. As a result, it does not always degrade polynucleotides to the single nucleotide level, it can stall at specific sites sparing certain fragments from exonucleolytic degradation. Processes self and pathogenic ssDNA and RNA molecules that reach the endolysosomal compartment via phagocytosis or autophagy and may serve as 'danger' signals for recognition by innate immune receptors such as toll-like receptors (TLRs). Degrades mitochondrial CpG-rich ssDNA fragments to prevent TLR9 activation and autoinflammatory response, but it can cleave viral RNA to generate ligands for TLR7 activation and initiate antiviral immune responses. In plasmacytoid dendritic cells, it cooperates with endonuclease RNASET2 to release 2',3'-cyclic guanosine monophosphate (2',3'-cGMP), a potent stimulatory ligand for TLR7. Produces 2',3'-cGMPs and cytidine-rich RNA fragments that occupy TLR7 ligand-binding pockets and trigger a signaling-competent state. Can exert polynucleotide phosphatase activity toward 5'-phosphorylated ssDNA substrates although at a slow rate. Transphosphatidylase that catalyzes the exchange with R to S stereo-inversion of the glycerol moiety between (S,R)-lysophosphatidylglycerol (LPG) and monoacylglycerol (MAG) substrates to yield (S,S)-bis(monoacylglycero)phosphate (BMP). Can synthesize a variety of (S,S)-BMPs representing the main phospholipid constituent of lysosomal intralumenal vesicle (ILV) membranes that bind acid hydrolases for lipid degradation. Regulates the homeostasis and interorganellar communication of the endolysosomal system with an overall impact on cellular removal of dysfunctional organelles via autophagy as well as proper protein and lipid turnover. May play a role in myotube formation in response to ER stress. The polypeptide is 5'-3' exonuclease PLD4 (Homo sapiens (Human)).